The following is a 193-amino-acid chain: Holliday junction branch migration complex subunit RuvA (193 aa).

Residues 1–64 (MIGRIAGTLI…EDAHLLYGFG (64 aa)) form a domain I region. Residues 65–143 (SAAERNTFRE…AELGHAPGAA (79 aa)) form a domain II region. The flexible linker stretch occupies residues 144-151 (PVHDSAVD). The tract at residues 151–193 (DILNALLALGYSEKEAATAIKQVPAGTGVSDGIKLALKALSKA) is domain III.

This sequence belongs to the RuvA family. Homotetramer. Forms an RuvA(8)-RuvB(12)-Holliday junction (HJ) complex. HJ DNA is sandwiched between 2 RuvA tetramers; dsDNA enters through RuvA and exits via RuvB. An RuvB hexamer assembles on each DNA strand where it exits the tetramer. Each RuvB hexamer is contacted by two RuvA subunits (via domain III) on 2 adjacent RuvB subunits; this complex drives branch migration. In the full resolvosome a probable DNA-RuvA(4)-RuvB(12)-RuvC(2) complex forms which resolves the HJ.

Its subcellular location is the cytoplasm. In terms of biological role, the RuvA-RuvB-RuvC complex processes Holliday junction (HJ) DNA during genetic recombination and DNA repair, while the RuvA-RuvB complex plays an important role in the rescue of blocked DNA replication forks via replication fork reversal (RFR). RuvA specifically binds to HJ cruciform DNA, conferring on it an open structure. The RuvB hexamer acts as an ATP-dependent pump, pulling dsDNA into and through the RuvAB complex. HJ branch migration allows RuvC to scan DNA until it finds its consensus sequence, where it cleaves and resolves the cruciform DNA. The polypeptide is Holliday junction branch migration complex subunit RuvA (Cupriavidus pinatubonensis (strain JMP 134 / LMG 1197) (Cupriavidus necator (strain JMP 134))).